Here is a 158-residue protein sequence, read N- to C-terminus: Ribosome maturation factor RimP (158 aa).

This sequence belongs to the RimP family.

It is found in the cytoplasm. Required for maturation of 30S ribosomal subunits. The chain is Ribosome maturation factor RimP from Deinococcus radiodurans (strain ATCC 13939 / DSM 20539 / JCM 16871 / CCUG 27074 / LMG 4051 / NBRC 15346 / NCIMB 9279 / VKM B-1422 / R1).